Reading from the N-terminus, the 141-residue chain is Large ribosomal subunit protein uL11 (141 aa).

Belongs to the universal ribosomal protein uL11 family. In terms of assembly, part of the ribosomal stalk of the 50S ribosomal subunit. Interacts with L10 and the large rRNA to form the base of the stalk. L10 forms an elongated spine to which L12 dimers bind in a sequential fashion forming a multimeric L10(L12)X complex. One or more lysine residues are methylated.

Functionally, forms part of the ribosomal stalk which helps the ribosome interact with GTP-bound translation factors. In Campylobacter concisus (strain 13826), this protein is Large ribosomal subunit protein uL11.